Reading from the N-terminus, the 378-residue chain is Phosphoglycerate kinase (378 aa).

Positions 1, 2, 3, 4, 16, 17, 40, 41, 43, 44, 99, 100, 147, and 148 each coordinate (2R)-3-phosphoglycerate. G191 serves as a coordination point for ADP. A CDP-binding site is contributed by G191. 2 residues coordinate AMP: A192 and K193. ATP is bound at residue A192. A192 is a binding site for Mg(2+). A CDP-binding site is contributed by D196. D196 contributes to the Mg(2+) binding site. Position 197 (K197) interacts with AMP. ATP is bound at residue K197. An ADP-binding site is contributed by G215. G215 provides a ligand contact to CDP. G216 and G288 together coordinate AMP. ATP is bound by residues G216 and G288. CDP contacts are provided by G313 and F318. F318 provides a ligand contact to ADP. Residue E319 participates in AMP binding. ATP is bound by residues E319, D351, and T352. D351 lines the Mg(2+) pocket.

This sequence belongs to the phosphoglycerate kinase family. In terms of assembly, monomer. Requires Mg(2+) as cofactor.

The enzyme catalyses (2R)-3-phosphoglycerate + ATP = (2R)-3-phospho-glyceroyl phosphate + ADP. It functions in the pathway carbohydrate degradation; glycolysis; pyruvate from D-glyceraldehyde 3-phosphate: step 2/5. The polypeptide is Phosphoglycerate kinase (PGK) (Condylostoma magnum).